A 642-amino-acid chain; its full sequence is MPVITLPDGSQRHYDHPVSPMDVALDIGPGLAKATIAGRVNGELVDACDLIENDATLAIITAKDEEGLEIIRHSCAHLLGHAIKQLWPHTKMAIGPVVDNGFYYDVDLDRTLTQEDVEALEKRMHELAEKNYDVIKKKVSWHDARETFVKRGETYKVAILDENIAHDDKPGLYHHEEYVDMCRGPHVPNMRFCHHFKLMKTAGAYWRGDSNNKMLQRIYGTAWADKKALNAYLQRLEEAAKRDHRKIGKQLDLYHMQEEAPGMVFWHNDGWTIFRELEVFVRSKLKEYQYQEVKGPFMMDRVLWEKTGHWDNYKDAMFTTSSENREYCIKPMNCPGHVQIFNQGLKSYRDLPLRMAEFGSCHRNEPSGALHGLMRVRGFTQDDAHIFCTEEQIRDEVNACIRMVYDMYSPFGFEKIVVKLSTRPDKRIGSDEMWDRAEADLAVALEENNIPFEYQLGEGAFYGPKIEFTLYDCLDRAWQCGTVQLDFSLPSRLSASYVGEDNERKVPVMIHRAILGSMERFIGILTEEFAGFFPTWLAPVQVVVMNITDSQSGYVNELTQKLQNAGIRVKADLRNEKIGFKIREHTLRRVPYMLVCGDKEVEAGKVAVRTRRGKDLGSLDVNDVIEKLQQEIRSRSLQQLEE.

Residues 1 to 61 (MPVITLPDGS…ENDATLAIIT (61 aa)) form the TGS domain. The tract at residues 243–534 (DHRKIGKQLD…LTEEFAGFFP (292 aa)) is catalytic. Residues C334, H385, and H511 each coordinate Zn(2+).

It belongs to the class-II aminoacyl-tRNA synthetase family. Homodimer. The cofactor is Zn(2+).

The protein resides in the cytoplasm. The catalysed reaction is tRNA(Thr) + L-threonine + ATP = L-threonyl-tRNA(Thr) + AMP + diphosphate + H(+). Functionally, catalyzes the attachment of threonine to tRNA(Thr) in a two-step reaction: L-threonine is first activated by ATP to form Thr-AMP and then transferred to the acceptor end of tRNA(Thr). Also edits incorrectly charged L-seryl-tRNA(Thr). This is Threonine--tRNA ligase from Salmonella paratyphi C (strain RKS4594).